We begin with the raw amino-acid sequence, 171 residues long: Large ribosomal subunit protein bL21 (171 aa).

Residues 144–171 (AAPAKAEAAPKKKAAPKKAAAKTEEGEA) form a disordered region. Positions 154-163 (KKKAAPKKAA) are enriched in basic residues.

The protein belongs to the bacterial ribosomal protein bL21 family. Part of the 50S ribosomal subunit. Contacts protein L20.

This protein binds to 23S rRNA in the presence of protein L20. The sequence is that of Large ribosomal subunit protein bL21 from Caulobacter vibrioides (strain ATCC 19089 / CIP 103742 / CB 15) (Caulobacter crescentus).